The following is a 180-amino-acid chain: ATP-dependent protease subunit HslV (180 aa).

T5 is a catalytic residue. Na(+) is bound by residues G161, C164, and T167.

This sequence belongs to the peptidase T1B family. HslV subfamily. As to quaternary structure, a double ring-shaped homohexamer of HslV is capped on each side by a ring-shaped HslU homohexamer. The assembly of the HslU/HslV complex is dependent on binding of ATP.

It localises to the cytoplasm. The catalysed reaction is ATP-dependent cleavage of peptide bonds with broad specificity.. Allosterically activated by HslU binding. Functionally, protease subunit of a proteasome-like degradation complex believed to be a general protein degrading machinery. This chain is ATP-dependent protease subunit HslV, found in Campylobacter lari (strain RM2100 / D67 / ATCC BAA-1060).